Reading from the N-terminus, the 239-residue chain is Uridylate kinase (239 aa).

Position 10–13 (10–13 (KLSG)) interacts with ATP. An involved in allosteric activation by GTP region spans residues 18–23 (GEQGYG). Gly52 contributes to the UMP binding site. 2 residues coordinate ATP: Gly53 and Arg57. UMP is bound by residues Asp72 and 133–140 (TGNPYFST). ATP is bound by residues Asn161, Tyr167, and Glu170.

Belongs to the UMP kinase family. Homohexamer.

It is found in the cytoplasm. The catalysed reaction is UMP + ATP = UDP + ADP. The protein operates within pyrimidine metabolism; CTP biosynthesis via de novo pathway; UDP from UMP (UMPK route): step 1/1. With respect to regulation, allosterically activated by GTP. Inhibited by UTP. In terms of biological role, catalyzes the reversible phosphorylation of UMP to UDP. This is Uridylate kinase from Halalkalibacterium halodurans (strain ATCC BAA-125 / DSM 18197 / FERM 7344 / JCM 9153 / C-125) (Bacillus halodurans).